The sequence spans 89 residues: MLTRVPVLILAVIVMLALCQEPEKPEKRPALLSRYGRAVLPRYGKRSGNLMESSQNSLTEESSDVVCQLIDGKYICLPVDAVRFRPFFL.

A signal peptide spans 1-19; it reads MLTRVPVLILAVIVMLALC. The propeptide occupies 20–26; it reads QEPEKPE. Tyrosine amide is present on residues Tyr35 and Tyr43. Positions 47–89 are excised as a propeptide; that stretch reads SGNLMESSQNSLTEESSDVVCQLIDGKYICLPVDAVRFRPFFL.

As to expression, expressed in the M1 and M2 pharyngeal neurons from where the LURY-1-1 and LURY-1-2 peptides are secreted.

The protein resides in the secreted. Acts as a ligand for the npr-22 receptor and controls food-related processes including feeding, lifespan, egg-laying and roaming behavior. Secreted in the presence of food, leading to reduced feeding and roaming behavior and increased egg laying and lifespan. Activity may be latent under normal conditions but induced under conditions that cause hyperactivation of the pharynx such as abrupt refeeding after starvation. This is Luqin-like RYamide peptides lury-1 from Caenorhabditis elegans.